The primary structure comprises 172 residues: Galectin-related protein (172 aa).

Position 2 is an N-acetylalanine (Ala-2). Phosphoserine occurs at positions 22 and 25. One can recognise a Galectin domain in the interval 39–168; sequence PFCGHIKGGM…TIKINGDLQI (130 aa).

Monomer.

Its function is as follows. Does not bind lactose, and may not bind carbohydrates. The sequence is that of Galectin-related protein (LGALSL) from Homo sapiens (Human).